We begin with the raw amino-acid sequence, 176 residues long: Probable chemoreceptor glutamine deamidase CheD (176 aa).

It belongs to the CheD family.

The catalysed reaction is L-glutaminyl-[protein] + H2O = L-glutamyl-[protein] + NH4(+). Functionally, probably deamidates glutamine residues to glutamate on methyl-accepting chemotaxis receptors (MCPs), playing an important role in chemotaxis. This is Probable chemoreceptor glutamine deamidase CheD from Rhodospirillum rubrum (strain ATCC 11170 / ATH 1.1.1 / DSM 467 / LMG 4362 / NCIMB 8255 / S1).